Consider the following 482-residue polypeptide: tRNA sulfurtransferase (482 aa).

One can recognise a THUMP domain in the interval 61–165 (PAIRDALTRI…NDRLLLVKGR (105 aa)). Residues 183–184 (LI), Lys265, Gly287, and Gln296 contribute to the ATP site. Cysteines 344 and 456 form a disulfide. A Rhodanese domain is found at 404–482 (FGANDAILDI…GFSNVKVYRP (79 aa)). Catalysis depends on Cys456, which acts as the Cysteine persulfide intermediate.

It belongs to the ThiI family.

It localises to the cytoplasm. The enzyme catalyses [ThiI sulfur-carrier protein]-S-sulfanyl-L-cysteine + a uridine in tRNA + 2 reduced [2Fe-2S]-[ferredoxin] + ATP + H(+) = [ThiI sulfur-carrier protein]-L-cysteine + a 4-thiouridine in tRNA + 2 oxidized [2Fe-2S]-[ferredoxin] + AMP + diphosphate. It carries out the reaction [ThiS sulfur-carrier protein]-C-terminal Gly-Gly-AMP + S-sulfanyl-L-cysteinyl-[cysteine desulfurase] + AH2 = [ThiS sulfur-carrier protein]-C-terminal-Gly-aminoethanethioate + L-cysteinyl-[cysteine desulfurase] + A + AMP + 2 H(+). The protein operates within cofactor biosynthesis; thiamine diphosphate biosynthesis. Functionally, catalyzes the ATP-dependent transfer of a sulfur to tRNA to produce 4-thiouridine in position 8 of tRNAs, which functions as a near-UV photosensor. Also catalyzes the transfer of sulfur to the sulfur carrier protein ThiS, forming ThiS-thiocarboxylate. This is a step in the synthesis of thiazole, in the thiamine biosynthesis pathway. The sulfur is donated as persulfide by IscS. This chain is tRNA sulfurtransferase, found in Klebsiella pneumoniae (strain 342).